The primary structure comprises 181 residues: Adenylate kinase 2 (181 aa).

10 to 15 (GSGKST) is an ATP binding site. Positions 30 to 59 (SMGGILREAIANATPLGIKAKPYVERGDLL) are NMP. Residues Arg36, 57 to 59 (DLL), 85 to 88 (GYPR), and Gln92 contribute to the AMP site. The segment at 126 to 132 (NRSLFDD) is LID. An ATP-binding site is contributed by Arg127. Residue Arg140 participates in AMP binding. Pro168 is a binding site for ATP.

It belongs to the adenylate kinase family. As to quaternary structure, monomer.

The protein localises to the cytoplasm. It carries out the reaction AMP + ATP = 2 ADP. It functions in the pathway purine metabolism; AMP biosynthesis via salvage pathway; AMP from ADP: step 1/1. In terms of biological role, catalyzes the reversible transfer of the terminal phosphate group between ATP and AMP. Plays an important role in cellular energy homeostasis and in adenine nucleotide metabolism. In Synechocystis sp. (strain ATCC 27184 / PCC 6803 / Kazusa), this protein is Adenylate kinase 2.